Reading from the N-terminus, the 772-residue chain is Acylamino-acid-releasing enzyme 2 (772 aa).

Residues Ser-617, Asp-708, and His-740 each act as charge relay system in the active site.

Belongs to the peptidase S9C family. In terms of assembly, homotetramer.

It localises to the cytoplasm. It carries out the reaction Cleavage of an N-acetyl or N-formyl amino acid from the N-terminus of a polypeptide.. Functionally, catalyzes the hydrolysis of the N-terminal peptide bond of an N-acetylated peptide to generate an N-acetylated amino acid and a peptide with a free N-terminus. In Oryza sativa subsp. japonica (Rice), this protein is Acylamino-acid-releasing enzyme 2.